Consider the following 146-residue polypeptide: Hemoglobin subunit beta-2 (146 aa).

The 145-residue stretch at 2-146 (HWSAEEKQLI…VAHALARRYH (145 aa)) folds into the Globin domain. 2 residues coordinate heme b: His-63 and His-92.

Belongs to the globin family. Heterotetramer of two alpha chains and two beta chains. As to expression, red blood cells.

Its function is as follows. Involved in oxygen transport from the lung to the various peripheral tissues. The protein is Hemoglobin subunit beta-2 (HBB2) of Naja naja (Indian cobra).